The chain runs to 481 residues: MTVFIETQNFGTITRIIGPVLDITFTGNKMPKIYHALSIIDKNSEGLDIFIVCEVQQLLGDHCVRAISMNATDGLKRGMTVFDTGDVLKVPVGRSTLGRIFNVLGETIDNLGPADTSNQLPIHRSAPKFIDLDTKLSIFETGIKVVDLLAPYRRGGKIGLFGGAGVGKTVLIMELINNIAKTHGGVSVFGGVGERTREGNDLYMEMKESGIINEALISESKVALVYGQMNEPPGARMRVGLTALTMAEYFRDVSSQDVLLFIDNIFRFLQAGSEVSALLGRLPSAVGYQPTLASEMGALQERITSTKDGSITSIQAVYIPADDLTDPAPATTFAHLDATTVLSRGLASKGIYPAVDPLESTSTMLQPWIVGEEHYKCSQNVKQTLQRYKELQDIIAILGLDELSPDDRLIVARARKIERFLSQPFFVAELFTGLPGKYVSLAKTIQGFNLILSGDLDALSEQAFYLVGDIEEAISKGFLKK.

Gly162 to Thr169 serves as a coordination point for ATP.

The protein belongs to the ATPase alpha/beta chains family. F-type ATPases have 2 components, CF(1) - the catalytic core - and CF(0) - the membrane proton channel. CF(1) has five subunits: alpha(3), beta(3), gamma(1), delta(1), epsilon(1). CF(0) has four main subunits: a(1), b(1), b'(1) and c(9-12).

It localises to the plastid membrane. The catalysed reaction is ATP + H2O + 4 H(+)(in) = ADP + phosphate + 5 H(+)(out). Functionally, produces ATP from ADP in the presence of a proton gradient across the membrane. The catalytic sites are hosted primarily by the beta subunits. The sequence is that of ATP synthase subunit beta, plastid (atpB) from Prototheca wickerhamii.